The sequence spans 604 residues: Nuclear factor erythroid 2-related factor 2 (604 aa).

Residues 29–31 carry the DLG motif motif; sequence DLG. Ser-40 carries the post-translational modification Phosphoserine; by PKC. The short motif at 79 to 82 is the ETGE motif element; that stretch reads ETGE. Residue Ser-214 is modified to Phosphoserine. Positions 334–447 are disordered; sequence TVEFNDSDSG…VPFTKDKHSS (114 aa). Composition is skewed to polar residues over residues 340 to 352 and 395 to 407; these read SDSG…SPSR and PTHS…QPLS. 3 N-linked (Glc) (glycation) lysine glycosylation sites follow: Lys-461, Lys-471, and Lys-486. Residues 496–559 enclose the bZIP domain; sequence LIRDIRRRGK…HLLKRKLSTL (64 aa). Arg-498 carries an N-linked (Glc) (glycation) arginine glycan. The basic motif stretch occupies residues 498 to 517; it reads RDIRRRGKNKVAAQNCRKRK. The interval 521-528 is leucine-zipper; the sequence is IVELEQDL. N-linked (Glc) (glycation) arginine glycosylation occurs at Arg-568. The segment at 570-604 is disordered; that stretch reads EDGKPYSPSEYSLQQTRDGNVFLVPKSKKPDTKKN. N-linked (Glc) (glycation) lysine glycosylation is present at Lys-573. The span at 578-587 shows a compositional bias: polar residues; sequence SEYSLQQTRD. The mediates interaction with CHD6 and is necessary to activate transcription stretch occupies residues 590–595; it reads VFLVPK. N6-acetyllysine; by CREBBP occurs at positions 595 and 598.

This sequence belongs to the bZIP family. CNC subfamily. As to quaternary structure, heterodimer; heterodimerizes with small Maf proteins. Interacts (via the bZIP domain) with MAFG and MAFK; required for binding to antioxidant response elements (AREs) on DNA. Interacts with KEAP1; the interaction is direct and promotes ubiquitination by the BCR(KEAP1) E3 ubiquitin ligase complex. Forms a ternary complex with PGAM5 and KEAP1. Interacts with EEF1D at heat shock promoter elements (HSE). Interacts via its leucine-zipper domain with the coiled-coil domain of PMF1. Interacts with CHD6; involved in activation of the transcription. Interacts with ESRRB; represses NFE2L2 transcriptional activity. Interacts with MOTS-c, a peptide produced by the mitochondrially encoded 12S rRNA MT-RNR1; the interaction occurs in the nucleus following metabolic stress. Ubiquitinated in the cytoplasm by the BCR(KEAP1) E3 ubiquitin ligase complex leading to its degradation. In response to oxidative stress, electrophile metabolites, such as sulforaphane, modify KEAP1, leading to inhibit activity of the BCR(KEAP1) complex, promoting NFE2L2/NRF2 nuclear accumulation and activity. In response to autophagy, the BCR(KEAP1) complex is inactivated. In terms of processing, phosphorylated by EIF2AK3/PERK following unfolded protein response (UPR), promoting dissociation from its cytoplasmic inhibitor KEAP1, followed by its translocation into the nucleus. Phosphorylation of Ser-40 by PKC in response to oxidative stress dissociates NFE2L2 from its cytoplasmic inhibitor KEAP1, promoting its translocation into the nucleus. Post-translationally, acetylation at Lys-595 and Lys-598 increases nuclear localization whereas deacetylation by SIRT1 enhances cytoplasmic presence. Glycation impairs transcription factor activity by preventing heterodimerization with small Maf proteins. Deglycation by FN3K restores activity.

The protein resides in the cytoplasm. It is found in the cytosol. Its subcellular location is the nucleus. Transcription factor that plays a key role in the response to oxidative stress: binds to antioxidant response (ARE) elements present in the promoter region of many cytoprotective genes, such as phase 2 detoxifying enzymes, and promotes their expression, thereby neutralizing reactive electrophiles. In normal conditions, ubiquitinated and degraded in the cytoplasm by the BCR(KEAP1) complex. In response to oxidative stress, electrophile metabolites inhibit activity of the BCR(KEAP1) complex, promoting nuclear accumulation of NFE2L2/NRF2, heterodimerization with one of the small Maf proteins and binding to ARE elements of cytoprotective target genes. The NFE2L2/NRF2 pathway is also activated in response to selective autophagy: autophagy promotes interaction between KEAP1 and SQSTM1/p62 and subsequent inactivation of the BCR(KEAP1) complex, leading to NFE2L2/NRF2 nuclear accumulation and expression of cytoprotective genes. The NFE2L2/NRF2 pathway is also activated during the unfolded protein response (UPR), contributing to redox homeostasis and cell survival following endoplasmic reticulum stress. May also be involved in the transcriptional activation of genes of the beta-globin cluster by mediating enhancer activity of hypersensitive site 2 of the beta-globin locus control region. Also plays an important role in the regulation of the innate immune response. It is a critical regulator of the innate immune response and survival during sepsis by maintaining redox homeostasis and restraint of the dysregulation of pro-inflammatory signaling pathways like MyD88-dependent and -independent and TNF-alpha signaling. Suppresses macrophage inflammatory response by blocking pro-inflammatory cytokine transcription and the induction of IL6. Binds to the proximity of pro-inflammatory genes in macrophages and inhibits RNA Pol II recruitment. The inhibition is independent of the Nrf2-binding motif and reactive oxygen species level. Represses antiviral cytosolic DNA sensing by suppressing the expression of the adapter protein STING1 and decreasing responsiveness to STING1 agonists while increasing susceptibility to infection with DNA viruses. This chain is Nuclear factor erythroid 2-related factor 2, found in Rattus norvegicus (Rat).